The chain runs to 84 residues: MRGSSNKKIDPRIHYLVPKHEVLNIDEAYKILKELGIRPEQLPWIRASDPVARSINAKPGDIIRIIRKSQLYGEVVSYRYVISG.

Belongs to the archaeal Rpo5/eukaryotic RPB5 RNA polymerase subunit family. Part of the 13-subunit RNA polymerase complex.

Its subcellular location is the cytoplasm. The catalysed reaction is RNA(n) + a ribonucleoside 5'-triphosphate = RNA(n+1) + diphosphate. Functionally, DNA-dependent RNA polymerase (RNAP) catalyzes the transcription of DNA into RNA using the four ribonucleoside triphosphates as substrates. The protein is DNA-directed RNA polymerase subunit Rpo5 of Saccharolobus solfataricus (strain ATCC 35092 / DSM 1617 / JCM 11322 / P2) (Sulfolobus solfataricus).